A 753-amino-acid chain; its full sequence is ATPase family gene 2 protein homolog B (753 aa).

Met1 bears the N-acetylmethionine mark. The tract at residues 1–189 (MAPDSDPFPE…PRTRVSLGGE (189 aa)) is required for interaction with AFG2A and CINP. The tract at residues 171 to 203 (SPDPAGLVTPRTRVSLGGEPPSEAQPQPEVPLG) is disordered. ATP is bound by residues 241-248 (GPPGVGKT) and 505-512 (GPPGCAKT).

It belongs to the AAA ATPase family. AFG2 subfamily. In terms of assembly, part of the 55LCC heterohexameric ATPase complex composed at least of AIRIM, AFG2A, AFG2B and CINP. Associates with pre-60S ribosomal particles. In terms of tissue distribution, expressed in both neurons and glia during embryonic and adult stages of brain development.

The protein resides in the cytoplasm. It localises to the cytoskeleton. The protein localises to the spindle. Its subcellular location is the nucleus. It carries out the reaction ATP + H2O = ADP + phosphate + H(+). In the context of 55LCC heterohexameric ATPase complex, the ATPase activity is stimulated by DNA binding and inhibited in presence of RNA. Its function is as follows. ATP-dependent chaperone part of the 55LCC heterohexameric ATPase complex which is chromatin-associated and promotes replisome proteostasis to maintain replication fork progression and genome stability. Required for replication fork progression, sister chromatid cohesion, and chromosome stability. The ATPase activity is specifically enhanced by replication fork DNA and is coupled to cysteine protease-dependent cleavage of replisome substrates in response to replication fork damage. Uses ATPase activity to process replisome substrates in S-phase, facilitating their proteolytic turnover from chromatin to ensure DNA replication and mitotic fidelity. Plays an essential role in the cytoplasmic maturation steps of pre-60S ribosomal particles by promoting the release of shuttling protein RSL24D1/RLP24 from the pre-ribosomal particles. The polypeptide is ATPase family gene 2 protein homolog B (Homo sapiens (Human)).